The primary structure comprises 298 residues: Cation-efflux pump FieF (298 aa).

The helical transmembrane segment at Leu24–Val44 threads the bilayer. Positions 45 and 49 each coordinate Zn(2+). 2 consecutive transmembrane segments (helical) span residues Ser80–Ile100 and Pro112–Phe132. Zn(2+)-binding residues include His151 and Asp155. 2 helical membrane passes run Ser154–His174 and Ala176–Gly196.

It belongs to the cation diffusion facilitator (CDF) transporter (TC 2.A.4) family. FieF subfamily. Homodimer.

It is found in the cell inner membrane. It carries out the reaction Zn(2+)(in) + H(+)(out) = Zn(2+)(out) + H(+)(in). The enzyme catalyses Cd(2+)(in) + H(+)(out) = Cd(2+)(out) + H(+)(in). It catalyses the reaction Fe(2+)(in) + H(+)(out) = Fe(2+)(out) + H(+)(in). Functionally, divalent metal cation transporter which exports Zn(2+), Cd(2+) and possibly Fe(2+). May be involved in zinc and iron detoxification by efflux. The protein is Cation-efflux pump FieF of Salmonella typhi.